A 500-amino-acid polypeptide reads, in one-letter code: Cytochrome P450 monooxygenase 103 (500 aa).

2 helical membrane-spanning segments follow: residues 1–21 (MAST…YLLR) and 26–46 (PLYA…IGAL). N-linked (GlcNAc...) asparagine glycosylation occurs at N374. C441 is a binding site for heme.

The protein belongs to the cytochrome P450 family. The cofactor is heme.

It is found in the membrane. Its pathway is secondary metabolite biosynthesis. In terms of biological role, cytochrome P450 monooxygenase that is able to use testosterone as a substrate for oxidation. This Postia placenta (strain ATCC 44394 / Madison 698-R) (Brown rot fungus) protein is Cytochrome P450 monooxygenase 103.